Reading from the N-terminus, the 214-residue chain is Ribonuclease HII (214 aa).

Positions 26 to 214 (EIVCGVDEAG…PVREAFDLIR (189 aa)) constitute an RNase H type-2 domain. A divalent metal cation contacts are provided by D32, E33, and D124.

It belongs to the RNase HII family. It depends on Mn(2+) as a cofactor. Requires Mg(2+) as cofactor.

The protein resides in the cytoplasm. It catalyses the reaction Endonucleolytic cleavage to 5'-phosphomonoester.. Its function is as follows. Endonuclease that specifically degrades the RNA of RNA-DNA hybrids. This Burkholderia thailandensis (strain ATCC 700388 / DSM 13276 / CCUG 48851 / CIP 106301 / E264) protein is Ribonuclease HII.